Reading from the N-terminus, the 318-residue chain is Ribose-phosphate pyrophosphokinase 2 (318 aa).

Position 96–101 (96–101) interacts with ATP; sequence RQDKKD. Mg(2+) is bound by residues Asp-128, His-130, Asp-139, and Asp-143. Position 130 (His-130) interacts with ATP. The binding of phosphoribosylpyrophosphate stretch occupies residues 212 to 227; that stretch reads KDRVAILVDDMADTCG.

The protein belongs to the ribose-phosphate pyrophosphokinase family. As to quaternary structure, homodimer. The active form is probably a hexamer composed of 3 homodimers. The cofactor is Mg(2+).

The enzyme catalyses D-ribose 5-phosphate + ATP = 5-phospho-alpha-D-ribose 1-diphosphate + AMP + H(+). The protein operates within metabolic intermediate biosynthesis; 5-phospho-alpha-D-ribose 1-diphosphate biosynthesis; 5-phospho-alpha-D-ribose 1-diphosphate from D-ribose 5-phosphate (route I): step 1/1. With respect to regulation, activated by magnesium and inorganic phosphate. Competitively or non-competitively inhibited by ADP, 2,3-bisphosphoglyceride or GDP. Functionally, catalyzes the synthesis of phosphoribosylpyrophosphate (PRPP) that is essential for nucleotide synthesis. The chain is Ribose-phosphate pyrophosphokinase 2 (prps2) from Xenopus laevis (African clawed frog).